We begin with the raw amino-acid sequence, 544 residues long: CTP synthase (544 aa).

An amidoligase domain region spans residues 1–265 (MTKFIFVTGG…DNIITEQLQL (265 aa)). S13 serves as a coordination point for CTP. A UTP-binding site is contributed by S13. ATP-binding positions include 14-19 (SLGKGI) and D71. Mg(2+) is bound by residues D71 and E139. Residues 146 to 148 (DIE), 186 to 191 (KTKPTQ), and K222 each bind CTP. Residues 186 to 191 (KTKPTQ) and K222 contribute to the UTP site. Positions 290–544 (KIAMVGKYVD…VKAALNNKKA (255 aa)) constitute a Glutamine amidotransferase type-1 domain. G353 is a binding site for L-glutamine. C380 (nucleophile; for glutamine hydrolysis) is an active-site residue. Residues 381–384 (LGMQ), E404, and R471 contribute to the L-glutamine site. Active-site residues include H517 and E519.

This sequence belongs to the CTP synthase family. As to quaternary structure, homotetramer.

The enzyme catalyses UTP + L-glutamine + ATP + H2O = CTP + L-glutamate + ADP + phosphate + 2 H(+). The catalysed reaction is L-glutamine + H2O = L-glutamate + NH4(+). It catalyses the reaction UTP + NH4(+) + ATP = CTP + ADP + phosphate + 2 H(+). Its pathway is pyrimidine metabolism; CTP biosynthesis via de novo pathway; CTP from UDP: step 2/2. With respect to regulation, allosterically activated by GTP, when glutamine is the substrate; GTP has no effect on the reaction when ammonia is the substrate. The allosteric effector GTP functions by stabilizing the protein conformation that binds the tetrahedral intermediate(s) formed during glutamine hydrolysis. Inhibited by the product CTP, via allosteric rather than competitive inhibition. Its function is as follows. Catalyzes the ATP-dependent amination of UTP to CTP with either L-glutamine or ammonia as the source of nitrogen. Regulates intracellular CTP levels through interactions with the four ribonucleotide triphosphates. In Neisseria meningitidis serogroup C / serotype 2a (strain ATCC 700532 / DSM 15464 / FAM18), this protein is CTP synthase.